Reading from the N-terminus, the 270-residue chain is 5'-AMP-activated protein kinase subunit beta-1 (270 aa).

The interval 1–44 is disordered; sequence MGNTSSERAALERQAGHKTPRRDSSGGAKDGDRPKILMDSPEDA. Residue Gly-2 is the site of N-myristoyl glycine attachment. At Thr-4 the chain carries Phosphothreonine. Residues Ser-5 and Ser-6 each carry the phosphoserine modification. Residues 9–36 show a composition bias toward basic and acidic residues; the sequence is AALERQAGHKTPRRDSSGGAKDGDRPKI. At Thr-19 the chain carries Phosphothreonine. Phosphoserine; by autocatalysis occurs at positions 24 and 25. A phosphoserine mark is found at Ser-40, Ser-96, and Ser-101. A glycogen-binding domain region spans residues 68–163; sequence EANDKAPAQA…QVKKTDFEVF (96 aa). A Phosphoserine; by autocatalysis modification is found at Ser-108. At Thr-148 the chain carries Phosphothreonine. Ser-182 bears the Phosphoserine mark. The residue at position 201 (Lys-201) is an N6-succinyllysine.

It belongs to the 5'-AMP-activated protein kinase beta subunit family. AMPK is a heterotrimer of an alpha catalytic subunit (PRKAA1 or PRKAA2), a beta (PRKAB1 or PRKAB2) and a gamma non-catalytic subunits (PRKAG1, PRKAG2 or PRKAG3). Interacts with FNIP1 and FNIP2. Post-translationally, phosphorylated when associated with the catalytic subunit (PRKAA1 or PRKAA2). Phosphorylated by ULK1; leading to negatively regulate AMPK activity and suggesting the existence of a regulatory feedback loop between ULK1 and AMPK.

In terms of biological role, non-catalytic subunit of AMP-activated protein kinase (AMPK), an energy sensor protein kinase that plays a key role in regulating cellular energy metabolism. In response to reduction of intracellular ATP levels, AMPK activates energy-producing pathways and inhibits energy-consuming processes: inhibits protein, carbohydrate and lipid biosynthesis, as well as cell growth and proliferation. AMPK acts via direct phosphorylation of metabolic enzymes, and by longer-term effects via phosphorylation of transcription regulators. Also acts as a regulator of cellular polarity by remodeling the actin cytoskeleton; probably by indirectly activating myosin. Beta non-catalytic subunit acts as a scaffold on which the AMPK complex assembles, via its C-terminus that bridges alpha (PRKAA1 or PRKAA2) and gamma subunits (PRKAG1, PRKAG2 or PRKAG3). This Mus musculus (Mouse) protein is 5'-AMP-activated protein kinase subunit beta-1 (Prkab1).